The following is a 372-amino-acid chain: Alanine dehydrogenase 2 (372 aa).

His95 is a catalytic residue. 169–199 (KVTIIGGGQAGTNAAKIALGLGADVTILDVN) is an NAD(+) binding site.

This sequence belongs to the AlaDH/PNT family.

It carries out the reaction L-alanine + NAD(+) + H2O = pyruvate + NH4(+) + NADH + H(+). Its pathway is amino-acid degradation; L-alanine degradation via dehydrogenase pathway; NH(3) and pyruvate from L-alanine: step 1/1. Functionally, may play a role in cell wall synthesis as L-alanine is an important constituent of the peptidoglycan layer. This chain is Alanine dehydrogenase 2 (ald2), found in Staphylococcus aureus (strain MRSA252).